Here is a 147-residue protein sequence, read N- to C-terminus: D-aminoacyl-tRNA deacylase (147 aa).

Positions 136-137 match the Gly-cisPro motif, important for rejection of L-amino acids motif; that stretch reads GP.

It belongs to the DTD family. Homodimer.

Its subcellular location is the cytoplasm. The catalysed reaction is glycyl-tRNA(Ala) + H2O = tRNA(Ala) + glycine + H(+). It carries out the reaction a D-aminoacyl-tRNA + H2O = a tRNA + a D-alpha-amino acid + H(+). Its function is as follows. An aminoacyl-tRNA editing enzyme that deacylates mischarged D-aminoacyl-tRNAs. Also deacylates mischarged glycyl-tRNA(Ala), protecting cells against glycine mischarging by AlaRS. Acts via tRNA-based rather than protein-based catalysis; rejects L-amino acids rather than detecting D-amino acids in the active site. By recycling D-aminoacyl-tRNA to D-amino acids and free tRNA molecules, this enzyme counteracts the toxicity associated with the formation of D-aminoacyl-tRNA entities in vivo and helps enforce protein L-homochirality. The polypeptide is D-aminoacyl-tRNA deacylase (Sulfurihydrogenibium sp. (strain YO3AOP1)).